Reading from the N-terminus, the 263-residue chain is Glutamate racemase (263 aa).

Residues 13–14 and 45–46 each bind substrate; these read DS and YG. Cysteine 77 acts as the Proton donor/acceptor in catalysis. 78 to 79 contributes to the substrate binding site; the sequence is NT. Cysteine 185 serves as the catalytic Proton donor/acceptor. 186-187 is a substrate binding site; that stretch reads TH.

Belongs to the aspartate/glutamate racemases family.

It catalyses the reaction L-glutamate = D-glutamate. Its pathway is cell wall biogenesis; peptidoglycan biosynthesis. Its function is as follows. Provides the (R)-glutamate required for cell wall biosynthesis. This is Glutamate racemase from Vibrio vulnificus (strain YJ016).